We begin with the raw amino-acid sequence, 458 residues long: Sulfite exporter TauE/SafE family protein 2 (458 aa).

12 consecutive transmembrane segments (helical) span residues Phe-5–Pro-25, Ile-53–Ser-73, Ser-74–Leu-94, Ser-101–Val-121, Gly-128–Val-148, Ile-150–Phe-170, Phe-227–Leu-247, Tyr-267–Phe-287, Val-324–Ile-344, Leu-348–Phe-368, Gly-386–Val-406, and Ile-418–Gly-438.

Belongs to the 4-toluene sulfonate uptake permease (TSUP) (TC 2.A.102) family.

The protein resides in the membrane. This chain is Sulfite exporter TauE/SafE family protein 2, found in Arabidopsis thaliana (Mouse-ear cress).